Here is a 59-residue protein sequence, read N- to C-terminus: UPF0434 protein Rsph17029_0141 (59 aa).

It belongs to the UPF0434 family.

The polypeptide is UPF0434 protein Rsph17029_0141 (Cereibacter sphaeroides (strain ATCC 17029 / ATH 2.4.9) (Rhodobacter sphaeroides)).